A 428-amino-acid chain; its full sequence is Ribulose bisphosphate carboxylase (428 aa).

Lysine 151 serves as the catalytic Proton acceptor. Lysine 153 lines the substrate pocket. Residues lysine 177, aspartate 179, and glutamate 180 each coordinate Mg(2+). Lysine 177 carries the N6-carboxylysine modification. Catalysis depends on histidine 270, which acts as the Proton acceptor. Substrate contacts are provided by residues arginine 271, histidine 303, 354-356 (SGG), and 376-379 (QFGG).

Belongs to the RuBisCO large chain family. Type III subfamily. In terms of assembly, homodimer or homodecamer. In contrast to form I RuBisCO, the form III RuBisCO is composed solely of large subunits. The cofactor is Mg(2+).

The enzyme catalyses 2 (2R)-3-phosphoglycerate + 2 H(+) = D-ribulose 1,5-bisphosphate + CO2 + H2O. It catalyses the reaction D-ribulose 1,5-bisphosphate + O2 = 2-phosphoglycolate + (2R)-3-phosphoglycerate + 2 H(+). Its function is as follows. Catalyzes the addition of molecular CO(2) and H(2)O to ribulose 1,5-bisphosphate (RuBP), generating two molecules of 3-phosphoglycerate (3-PGA). Functions in an archaeal AMP degradation pathway, together with AMP phosphorylase and R15P isomerase. This is Ribulose bisphosphate carboxylase from Methanosarcina mazei (strain ATCC BAA-159 / DSM 3647 / Goe1 / Go1 / JCM 11833 / OCM 88) (Methanosarcina frisia).